Here is a 157-residue protein sequence, read N- to C-terminus: Phosphopantetheine adenylyltransferase (157 aa).

Ser-9 provides a ligand contact to substrate. ATP-binding positions include 9-10 (SF) and His-17. Lys-41, Val-73, and Lys-87 together coordinate substrate. ATP-binding positions include 88–90 (GLR), Glu-98, and 122–128 (YSFVSSS).

Belongs to the bacterial CoaD family. Homohexamer. It depends on Mg(2+) as a cofactor.

It localises to the cytoplasm. The catalysed reaction is (R)-4'-phosphopantetheine + ATP + H(+) = 3'-dephospho-CoA + diphosphate. Its pathway is cofactor biosynthesis; coenzyme A biosynthesis; CoA from (R)-pantothenate: step 4/5. Its function is as follows. Reversibly transfers an adenylyl group from ATP to 4'-phosphopantetheine, yielding dephospho-CoA (dPCoA) and pyrophosphate. The protein is Phosphopantetheine adenylyltransferase of Mycobacterium marinum (strain ATCC BAA-535 / M).